Reading from the N-terminus, the 594-residue chain is A-type ATP synthase subunit A (594 aa).

ATP is bound at residue 236 to 243; it reads GPFGSGKT.

It belongs to the ATPase alpha/beta chains family. In terms of assembly, has multiple subunits with at least A(3), B(3), C, D, E, F, H, I and proteolipid K(x).

It localises to the cell membrane. The catalysed reaction is ATP + H2O + 4 H(+)(in) = ADP + phosphate + 5 H(+)(out). Component of the A-type ATP synthase that produces ATP from ADP in the presence of a proton gradient across the membrane. The A chain is the catalytic subunit. The chain is A-type ATP synthase subunit A from Pyrobaculum neutrophilum (strain DSM 2338 / JCM 9278 / NBRC 100436 / V24Sta) (Thermoproteus neutrophilus).